The following is a 552-amino-acid chain: Putative transport protein HS_1470 (552 aa).

The next 5 helical transmembrane spans lie at 4–24 (IAIT…IGHW), 28–48 (GVGL…HFMN), 67–87 (LILF…ASLL), 95–115 (GLAT…YKVV), and 157–177 (MAYA…MWLI). 2 consecutive RCK C-terminal domains span residues 190-275 (KQFQ…VIGE) and 277-360 (IDMP…IIGN). The next 6 helical transmembrane spans lie at 370–390 (MLPV…PFYI), 402–424 (AGGP…LYWF), 438–458 (IVLF…DTLV), 463–483 (LEWM…TGII), 495–515 (LCGL…ANAI), and 529–549 (VYPL…ILLW).

Belongs to the AAE transporter (TC 2.A.81) family. YidE subfamily.

Its subcellular location is the cell membrane. The chain is Putative transport protein HS_1470 from Histophilus somni (strain 129Pt) (Haemophilus somnus).